A 142-amino-acid polypeptide reads, in one-letter code: Ribosome-binding factor A (142 aa).

Residues 118–142 are disordered; the sequence is DKNGDAEVDDTQVDDEPSVDSEKGE. Over residues 123–136 the composition is skewed to acidic residues; it reads AEVDDTQVDDEPSV.

This sequence belongs to the RbfA family. In terms of assembly, monomer. Binds 30S ribosomal subunits, but not 50S ribosomal subunits or 70S ribosomes.

Its subcellular location is the cytoplasm. One of several proteins that assist in the late maturation steps of the functional core of the 30S ribosomal subunit. Associates with free 30S ribosomal subunits (but not with 30S subunits that are part of 70S ribosomes or polysomes). Required for efficient processing of 16S rRNA. May interact with the 5'-terminal helix region of 16S rRNA. This is Ribosome-binding factor A from Colwellia psychrerythraea (strain 34H / ATCC BAA-681) (Vibrio psychroerythus).